The primary structure comprises 87 residues: uncharacterized protein (87 aa).

The helical transmembrane segment at 63–83 threads the bilayer; sequence IVLALVLGVFSLVGLIFIIYF.

It is found in the membrane. This is an uncharacterized protein from Dictyostelium discoideum (Social amoeba).